Consider the following 439-residue polypeptide: Dihydroorotate dehydrogenase (quinone), mitochondrial (439 aa).

The N-terminal 22 residues, 1 to 22 (MMHRVGFNVIGRRSFFTVNARR), are a transit peptide targeting the mitochondrion. The chain crosses the membrane as a helical span at residues 37-53 (LTALLLAGSAGYLYFMN). Residues 119-123 (AGLDK) and S143 each bind FMN. K123 lines the substrate pocket. A substrate-binding site is contributed by 168-172 (NRYGF). The FMN site is built by N215 and N245. 245-250 (NVSSPN) provides a ligand contact to substrate. Residue S248 is the Nucleophile of the active site. Residues K296 and S324 each contribute to the FMN site. 325–326 (NT) is a binding site for substrate. FMN contacts are provided by residues G350, G380, and 401-402 (YT).

The protein belongs to the dihydroorotate dehydrogenase family. Type 2 subfamily. FMN serves as cofactor.

The protein resides in the mitochondrion inner membrane. It carries out the reaction (S)-dihydroorotate + a quinone = orotate + a quinol. The protein operates within pyrimidine metabolism; UMP biosynthesis via de novo pathway; orotate from (S)-dihydroorotate (quinone route): step 1/1. In terms of biological role, catalyzes the conversion of dihydroorotate to orotate with quinone as electron acceptor. In Candida glabrata (strain ATCC 2001 / BCRC 20586 / JCM 3761 / NBRC 0622 / NRRL Y-65 / CBS 138) (Yeast), this protein is Dihydroorotate dehydrogenase (quinone), mitochondrial (URA9).